Reading from the N-terminus, the 98-residue chain is Large ribosomal subunit protein eL21 (98 aa).

The segment covering 1-17 has biased composition (basic residues); the sequence is MQRSRGFRSKSRRKMTK. Positions 1–28 are disordered; that stretch reads MQRSRGFRSKSRRKMTKVVREGRSNPIT.

It belongs to the eukaryotic ribosomal protein eL21 family.

The polypeptide is Large ribosomal subunit protein eL21 (Methanobrevibacter smithii (strain ATCC 35061 / DSM 861 / OCM 144 / PS)).